The chain runs to 147 residues: uncharacterized protein (147 aa).

An HTH marR-type domain is found at 1–137 (MRDNTIGSLI…LYELMTKVHK (137 aa)). Positions 53 to 76 (QMELAEKVTVTQGGISRMLTRLEK) form a DNA-binding region, H-T-H motif.

This is an uncharacterized protein from Bacillus anthracis.